Consider the following 256-residue polypeptide: Thiazole synthase (256 aa).

Lys-95 serves as the catalytic Schiff-base intermediate with DXP. 1-deoxy-D-xylulose 5-phosphate is bound by residues Gly-156, 182-183, and 204-205; these read AG and NT.

Belongs to the ThiG family. As to quaternary structure, homotetramer. Forms heterodimers with either ThiH or ThiS.

The protein localises to the cytoplasm. The enzyme catalyses [ThiS sulfur-carrier protein]-C-terminal-Gly-aminoethanethioate + 2-iminoacetate + 1-deoxy-D-xylulose 5-phosphate = [ThiS sulfur-carrier protein]-C-terminal Gly-Gly + 2-[(2R,5Z)-2-carboxy-4-methylthiazol-5(2H)-ylidene]ethyl phosphate + 2 H2O + H(+). The protein operates within cofactor biosynthesis; thiamine diphosphate biosynthesis. Its function is as follows. Catalyzes the rearrangement of 1-deoxy-D-xylulose 5-phosphate (DXP) to produce the thiazole phosphate moiety of thiamine. Sulfur is provided by the thiocarboxylate moiety of the carrier protein ThiS. In vitro, sulfur can be provided by H(2)S. The polypeptide is Thiazole synthase (Photobacterium profundum (strain SS9)).